Reading from the N-terminus, the 649-residue chain is Echinoderm microtubule-associated protein-like 2 (649 aa).

A tandem atypical propeller in EMLs region spans residues 10–649; sequence KEVIFSVEDG…DTSVLQWRVV (640 aa). 2 coiled-coil regions span residues 13 to 58 and 73 to 114; these read IFSV…LKLE and YLLP…LAIH. WD repeat units follow at residues 56 to 93, 97 to 144, 151 to 192, 195 to 234, 241 to 280, 285 to 323, 369 to 406, 410 to 447, 452 to 489, 495 to 535, 564 to 602, and 609 to 648; these read KLEW…LYSV, RQRH…IWDS, HVLG…VWDW, ETKV…FWTL, KRQG…VWGK, ITQA…LWGS, FSLL…LWSS, QPLW…LLDT, LVAI…VYTV, KVSR…YWDP, FGIW…LFSY, and ALSH…QWRV.

The protein belongs to the WD repeat EMAP family. Homotrimer; self-association is mediated by the N-terminal coiled coil. In terms of assembly, interacts with GRID2 and may also interact with GRID1. Interacts with EML3. Binds unpolymerized tubulins via its WD repeat region. Ubiquitous.

The protein resides in the cytoplasm. The protein localises to the cytoskeleton. It localises to the spindle. In terms of biological role, tubulin binding protein that inhibits microtubule nucleation and growth, resulting in shorter microtubules. The chain is Echinoderm microtubule-associated protein-like 2 (EML2) from Homo sapiens (Human).